The primary structure comprises 479 residues: Xylose isomerase (479 aa).

H144 is an active-site residue. Residues E275, E311, H314, D339, D350, D352, and Y382 each contribute to the Mn(2+) site.

The protein belongs to the xylose isomerase family. As to quaternary structure, homodimer. Mn(2+) is required as a cofactor.

The enzyme catalyses alpha-D-xylose = alpha-D-xylulofuranose. This is Xylose isomerase (XYLA) from Hordeum vulgare (Barley).